The chain runs to 303 residues: Rhomboid-related protein 2 (303 aa).

The disordered stretch occupies residues 20 to 39 (MKEELEEEEKMREDGGGKDR). Over residues 28-39 (EKMREDGGGKDR) the composition is skewed to basic and acidic residues. Transmembrane regions (helical) follow at residues 72 to 92 (PVFIISISLAELAVFIYYAVW), 128 to 148 (LVHAGVQHILGNLCMQLVLGI), 159 to 179 (VGLVYLAGVIAGSLASSIFDP), 183 to 203 (LVGASGGVYALMGGYFMNVLV), 212 to 232 (FGIFRLLIIILIIVLDMGFAL), 245 to 265 (VSFAAHIAGGFAGMSIGYTVF), and 278 to 298 (FWIAIAAYLACVLFAVFFNIF). Ser187 serves as the catalytic Nucleophile. His250 is an active-site residue.

The protein belongs to the peptidase S54 family. In terms of processing, proteolytic processing of the proenzyme produces a N-terminal fragment (NTF) and a C-terminal fragment (CTF). The processing is required for activation of the protease.

Its subcellular location is the cell membrane. The enzyme catalyses Cleaves type-1 transmembrane domains using a catalytic dyad composed of serine and histidine that are contributed by different transmembrane domains.. Functionally, involved in regulated intramembrane proteolysis and the subsequent release of functional polypeptides from their membrane anchors. Known substrate: EFNB3. In Homo sapiens (Human), this protein is Rhomboid-related protein 2 (RHBDL2).